Here is a 611-residue protein sequence, read N- to C-terminus: Brain-enriched guanylate kinase-associated protein (611 aa).

Tyr-156 carries the post-translational modification Phosphotyrosine. Ser-219, Ser-248, and Ser-265 each carry phosphoserine. Residue Thr-268 is modified to Phosphothreonine. A phosphoserine mark is found at Ser-284, Ser-364, and Ser-391. Arg-399 is subject to Asymmetric dimethylarginine. 7 positions are modified to phosphoserine: Ser-474, Ser-484, Ser-494, Ser-496, Ser-519, Ser-521, and Ser-525. The tract at residues 520–611 is disordered; the sequence is LSPSRSADPL…KAQLYGTLLN (92 aa). Basic and acidic residues predominate over residues 554–563; that stretch reads EPEHGSRDSL. 2 positions are modified to phosphoserine: Ser-571 and Ser-581.

In terms of assembly, interacts with DLG4 and DLGAP1 and forms a ternary complex. As to expression, brain-specific. Expressed in neurons and rather enriched at synaptic junctions.

It is found in the cytoplasm. Its subcellular location is the membrane. Its function is as follows. May sustain the structure of the postsynaptic density (PSD). This is Brain-enriched guanylate kinase-associated protein (Begain) from Rattus norvegicus (Rat).